A 243-amino-acid polypeptide reads, in one-letter code: Transmembrane protein 174 (243 aa).

2 consecutive transmembrane segments (helical) span residues 40 to 60 and 73 to 93; these read LLFS…MGWI and LLGP…VCKF.

As to quaternary structure, interacts with SLC34A1; regulates SLC34A1 internalization by PTH and FGF23. In terms of tissue distribution, kidney specific. Expressed in renal primary proximal tubule cells.

It is found in the endoplasmic reticulum membrane. The protein resides in the apical cell membrane. Its function is as follows. Regulator of plasma phosphate homeostasis. Decreases serum inorganic phosphate (Pi) uptake by regulating the sodium-phosphate cotransporter SLC34A1 trafficking by PTH and FGF23 in the kidney. This is Transmembrane protein 174 (Tmem174) from Mus musculus (Mouse).